The following is a 121-amino-acid chain: DNA-directed RNA polymerase subunit omega (121 aa).

Belongs to the RNA polymerase subunit omega family. In terms of assembly, the RNAP catalytic core consists of 2 alpha, 1 beta, 1 beta' and 1 omega subunit. When a sigma factor is associated with the core the holoenzyme is formed, which can initiate transcription.

It catalyses the reaction RNA(n) + a ribonucleoside 5'-triphosphate = RNA(n+1) + diphosphate. Functionally, promotes RNA polymerase assembly. Latches the N- and C-terminal regions of the beta' subunit thereby facilitating its interaction with the beta and alpha subunits. The sequence is that of DNA-directed RNA polymerase subunit omega from Syntrophobacter fumaroxidans (strain DSM 10017 / MPOB).